The sequence spans 191 residues: NADH-quinone oxidoreductase subunit B (191 aa).

[4Fe-4S] cluster contacts are provided by Cys70, Cys71, Cys135, and Cys165.

It belongs to the complex I 20 kDa subunit family. In terms of assembly, NDH-1 is composed of 14 different subunits. Subunits NuoB, C, D, E, F, and G constitute the peripheral sector of the complex. It depends on [4Fe-4S] cluster as a cofactor.

It is found in the cell inner membrane. It catalyses the reaction a quinone + NADH + 5 H(+)(in) = a quinol + NAD(+) + 4 H(+)(out). Its function is as follows. NDH-1 shuttles electrons from NADH, via FMN and iron-sulfur (Fe-S) centers, to quinones in the respiratory chain. The immediate electron acceptor for the enzyme in this species is believed to be ubiquinone. Couples the redox reaction to proton translocation (for every two electrons transferred, four hydrogen ions are translocated across the cytoplasmic membrane), and thus conserves the redox energy in a proton gradient. In Parvibaculum lavamentivorans (strain DS-1 / DSM 13023 / NCIMB 13966), this protein is NADH-quinone oxidoreductase subunit B.